The primary structure comprises 1580 residues: Pentafunctional AROM polypeptide (1580 aa).

The interval M1–N381 is 3-dehydroquinate synthase. Residues D44–T46, E81–K84, G114–V116, and D119 each bind NAD(+). Residue R130 coordinates 7-phospho-2-dehydro-3-deoxy-D-arabino-heptonate. Position 139–140 (T139–T140) interacts with NAD(+). Residues D146 and K152 each contribute to the 7-phospho-2-dehydro-3-deoxy-D-arabino-heptonate site. K161 provides a ligand contact to NAD(+). N162 is a binding site for 7-phospho-2-dehydro-3-deoxy-D-arabino-heptonate. NAD(+) is bound by residues F179–T182 and N190. E194 provides a ligand contact to Zn(2+). A 7-phospho-2-dehydro-3-deoxy-D-arabino-heptonate-binding site is contributed by K247. The active-site Proton acceptor; for 3-dehydroquinate synthase activity is E257. 7-phospho-2-dehydro-3-deoxy-D-arabino-heptonate contacts are provided by residues R261–N265 and H268. H268 provides a ligand contact to Zn(2+). Catalysis depends on H272, which acts as the Proton acceptor; for 3-dehydroquinate synthase activity. Residues H284 and K353 each coordinate 7-phospho-2-dehydro-3-deoxy-D-arabino-heptonate. Residue H284 participates in Zn(2+) binding. The interval V394–A838 is EPSP synthase. C820 acts as the For EPSP synthase activity in catalysis. Residues A857 to S1048 form a shikimate kinase region. ATP is bound at residue G863–T870. A 3-dehydroquinase region spans residues L1049–E1269. H1172 serves as the catalytic Proton acceptor; for 3-dehydroquinate dehydratase activity. K1200 acts as the Schiff-base intermediate with substrate; for 3-dehydroquinate dehydratase activity in catalysis. The interval S1282 to I1580 is shikimate dehydrogenase.

It in the N-terminal section; belongs to the sugar phosphate cyclases superfamily. Dehydroquinate synthase family. In the 2nd section; belongs to the EPSP synthase family. This sequence in the 3rd section; belongs to the shikimate kinase family. The protein in the 4th section; belongs to the type-I 3-dehydroquinase family. It in the C-terminal section; belongs to the shikimate dehydrogenase family. As to quaternary structure, homodimer. The cofactor is Zn(2+).

It is found in the cytoplasm. It carries out the reaction 7-phospho-2-dehydro-3-deoxy-D-arabino-heptonate = 3-dehydroquinate + phosphate. The enzyme catalyses 3-dehydroquinate = 3-dehydroshikimate + H2O. It catalyses the reaction shikimate + NADP(+) = 3-dehydroshikimate + NADPH + H(+). The catalysed reaction is shikimate + ATP = 3-phosphoshikimate + ADP + H(+). It carries out the reaction 3-phosphoshikimate + phosphoenolpyruvate = 5-O-(1-carboxyvinyl)-3-phosphoshikimate + phosphate. It functions in the pathway metabolic intermediate biosynthesis; chorismate biosynthesis; chorismate from D-erythrose 4-phosphate and phosphoenolpyruvate: step 2/7. The protein operates within metabolic intermediate biosynthesis; chorismate biosynthesis; chorismate from D-erythrose 4-phosphate and phosphoenolpyruvate: step 3/7. Its pathway is metabolic intermediate biosynthesis; chorismate biosynthesis; chorismate from D-erythrose 4-phosphate and phosphoenolpyruvate: step 4/7. It participates in metabolic intermediate biosynthesis; chorismate biosynthesis; chorismate from D-erythrose 4-phosphate and phosphoenolpyruvate: step 5/7. It functions in the pathway metabolic intermediate biosynthesis; chorismate biosynthesis; chorismate from D-erythrose 4-phosphate and phosphoenolpyruvate: step 6/7. Its function is as follows. The AROM polypeptide catalyzes 5 consecutive enzymatic reactions in prechorismate polyaromatic amino acid biosynthesis. This is Pentafunctional AROM polypeptide from Uncinocarpus reesii (strain UAMH 1704).